Here is an 85-residue protein sequence, read N- to C-terminus: Large ribosomal subunit protein bL27 (85 aa).

Residues 1 to 20 (MATKKAGGSTRNGRDSEAKR) are disordered.

Belongs to the bacterial ribosomal protein bL27 family.

The protein is Large ribosomal subunit protein bL27 of Pasteurella multocida (strain Pm70).